The sequence spans 205 residues: GTP cyclohydrolase-2 (205 aa).

GTP is bound at residue 49–53; sequence RLHSE. Residues cysteine 54, cysteine 65, and cysteine 67 each coordinate Zn(2+). GTP is bound by residues glutamine 70, 92-94, and threonine 114; that span reads EGR. The Proton acceptor role is filled by aspartate 126. Residue arginine 128 is the Nucleophile of the active site. GTP contacts are provided by threonine 149 and lysine 154.

The protein belongs to the GTP cyclohydrolase II family. It depends on Zn(2+) as a cofactor.

The enzyme catalyses GTP + 4 H2O = 2,5-diamino-6-hydroxy-4-(5-phosphoribosylamino)-pyrimidine + formate + 2 phosphate + 3 H(+). Its pathway is cofactor biosynthesis; riboflavin biosynthesis; 5-amino-6-(D-ribitylamino)uracil from GTP: step 1/4. In terms of biological role, catalyzes the conversion of GTP to 2,5-diamino-6-ribosylamino-4(3H)-pyrimidinone 5'-phosphate (DARP), formate and pyrophosphate. The protein is GTP cyclohydrolase-2 of Pseudomonas putida (strain GB-1).